A 119-amino-acid chain; its full sequence is Small ribosomal subunit protein uS13 (119 aa).

The disordered stretch occupies residues Gly94–Lys119.

Belongs to the universal ribosomal protein uS13 family. Part of the 30S ribosomal subunit. Forms a loose heterodimer with protein S19. Forms two bridges to the 50S subunit in the 70S ribosome.

Located at the top of the head of the 30S subunit, it contacts several helices of the 16S rRNA. In the 70S ribosome it contacts the 23S rRNA (bridge B1a) and protein L5 of the 50S subunit (bridge B1b), connecting the 2 subunits; these bridges are implicated in subunit movement. Contacts the tRNAs in the A and P-sites. In Alkalilimnicola ehrlichii (strain ATCC BAA-1101 / DSM 17681 / MLHE-1), this protein is Small ribosomal subunit protein uS13.